The sequence spans 126 residues: Methylglyoxal synthase (126 aa).

The MGS-like domain occupies 1-126; that stretch reads MAERQKIALI…ADRLLPVITE (126 aa). Residues His-12, Lys-16, 38–41, and 59–60 each bind substrate; these read TGTT and SG. Asp-65 acts as the Proton donor/acceptor in catalysis. His-92 lines the substrate pocket.

This sequence belongs to the methylglyoxal synthase family.

The catalysed reaction is dihydroxyacetone phosphate = methylglyoxal + phosphate. In terms of biological role, catalyzes the formation of methylglyoxal from dihydroxyacetone phosphate. The sequence is that of Methylglyoxal synthase from Allorhizobium ampelinum (strain ATCC BAA-846 / DSM 112012 / S4) (Agrobacterium vitis (strain S4)).